A 409-amino-acid polypeptide reads, in one-letter code: uncharacterized protein (409 aa).

The EAL domain occupies 1–209 (MRVFVARQPI…GHDLSTHFYS (209 aa)). Residues 203–392 (LSTHFYSYYE…GNQLDKEEAY (190 aa)) form the HDOD domain.

This is an uncharacterized protein from Bacillus subtilis (strain 168).